Consider the following 145-residue polypeptide: uncharacterized protein (145 aa).

This is an uncharacterized protein from Bacillus subtilis (strain 168).